The sequence spans 127 residues: Interacting with cytoskeleton protein 1 (127 aa).

Its subcellular location is the vacuole membrane. Its function is as follows. Required for viability of cells lacking mtDNA. The polypeptide is Interacting with cytoskeleton protein 1 (ICY1) (Saccharomyces cerevisiae (strain ATCC 204508 / S288c) (Baker's yeast)).